The sequence spans 560 residues: Beta-glucosidase 26, peroxisomal (560 aa).

Residues Gln-33, His-137, 182–183, Tyr-326, Glu-398, Trp-450, 457–458, and Tyr-466 each bind a beta-D-glucoside; these read NE and EW. Glu-183 serves as the catalytic Proton donor. Glu-398 (nucleophile) is an active-site residue.

It belongs to the glycosyl hydrolase 1 family.

It localises to the peroxisome. The enzyme catalyses Hydrolysis of terminal, non-reducing beta-D-glucosyl residues with release of beta-D-glucose.. Possesses beta-glucosidase activity toward 4-methyl-umbelliferyl-beta-D-glucoside in vitro. Possesses myrosinase activity toward indol-3-yl-methylglucosinolate (I3M) and 4-methoxy-indol-3-yl-methylglucosinolate (4MO-I3M) in vivo. Component of an inducible preinvasion resistance mechanism that prevents penetration of the nonhost fungal species B.graminis and E.pisi. Involved in indole glucosinolate (IGS) activation during pattern-triggered immunity (PTI). Functions as a myrosinase for the breakdown of flg22-triggered IGS. Required for both callose deposition and glucosinolate activation during pathogen-triggered resistance. During fungal attack, required for IGS activation that mediates broad-spectrum antifungal defense. The polypeptide is Beta-glucosidase 26, peroxisomal (Arabidopsis thaliana (Mouse-ear cress)).